Here is a 311-residue protein sequence, read N- to C-terminus: Thioredoxin reductase (311 aa).

35–42 (ERGIPGGQ) serves as a coordination point for FAD. An intrachain disulfide couples Cys134 to Cys137. FAD is bound at residue 277–286 (DVRDKGLRQI).

The protein belongs to the class-II pyridine nucleotide-disulfide oxidoreductase family. Homodimer. FAD is required as a cofactor.

Its subcellular location is the cytoplasm. The enzyme catalyses [thioredoxin]-dithiol + NADP(+) = [thioredoxin]-disulfide + NADPH + H(+). The protein is Thioredoxin reductase (trxB) of Staphylococcus aureus (strain MRSA252).